Here is a 208-residue protein sequence, read N- to C-terminus: N-(5'-phosphoribosyl)anthranilate isomerase (208 aa).

Belongs to the TrpF family.

It catalyses the reaction N-(5-phospho-beta-D-ribosyl)anthranilate = 1-(2-carboxyphenylamino)-1-deoxy-D-ribulose 5-phosphate. The protein operates within amino-acid biosynthesis; L-tryptophan biosynthesis; L-tryptophan from chorismate: step 3/5. The sequence is that of N-(5'-phosphoribosyl)anthranilate isomerase from Nitrosomonas eutropha (strain DSM 101675 / C91 / Nm57).